Consider the following 238-residue polypeptide: Deoxyribose-phosphate aldolase (238 aa).

D104 (proton donor/acceptor) is an active-site residue. K168 acts as the Schiff-base intermediate with acetaldehyde in catalysis. The active-site Proton donor/acceptor is K197.

The protein belongs to the DeoC/FbaB aldolase family. DeoC type 1 subfamily.

It localises to the cytoplasm. It carries out the reaction 2-deoxy-D-ribose 5-phosphate = D-glyceraldehyde 3-phosphate + acetaldehyde. The protein operates within carbohydrate degradation; 2-deoxy-D-ribose 1-phosphate degradation; D-glyceraldehyde 3-phosphate and acetaldehyde from 2-deoxy-alpha-D-ribose 1-phosphate: step 2/2. Catalyzes a reversible aldol reaction between acetaldehyde and D-glyceraldehyde 3-phosphate to generate 2-deoxy-D-ribose 5-phosphate. This chain is Deoxyribose-phosphate aldolase, found in Bacteroides thetaiotaomicron (strain ATCC 29148 / DSM 2079 / JCM 5827 / CCUG 10774 / NCTC 10582 / VPI-5482 / E50).